Consider the following 604-residue polypeptide: Protein TAX4 (604 aa).

Disordered stretches follow at residues 38-77 (HPNG…PRSI), 132-249 (SFSN…RQQE), 267-299 (GTLP…QQEN), 338-380 (DETF…KGLK), and 394-428 (PFPH…NEDK). Over residues 176–185 (YDNNVRSRSI) the composition is skewed to polar residues. Low complexity-rich tracts occupy residues 186–203 (SPQV…SISS) and 224–240 (SMSS…KASL). Composition is skewed to basic residues over residues 276–290 (SQRK…HRLL), 366–379 (KKKK…KKGL), and 396–421 (PHHH…HTSS). Residues 469–559 (ANEDDESHLQ…RVWNSVDGYV (91 aa)) form the EH domain.

Belongs to the IRS4 family. As to quaternary structure, interacts with INP51.

In terms of biological role, with IRS4, acts as a positive regulator of INP51 activity and phosphatidylinositol 4,5-bisphosphate turnover. Negatively regulates signaling through the cell integrity pathway, including the MAP kinase SLT2. This is Protein TAX4 (TAX4) from Saccharomyces cerevisiae (strain ATCC 204508 / S288c) (Baker's yeast).